The sequence spans 130 residues: Glycine cleavage system H protein (130 aa).

Residues 22-103 (KAYIGISDCA…PYGSWIAAIE (82 aa)) form the Lipoyl-binding domain. N6-lipoyllysine is present on Lys-63.

The protein belongs to the GcvH family. As to quaternary structure, the glycine cleavage system is composed of four proteins: P, T, L and H. Requires (R)-lipoate as cofactor.

In terms of biological role, the glycine cleavage system catalyzes the degradation of glycine. The H protein shuttles the methylamine group of glycine from the P protein to the T protein. The protein is Glycine cleavage system H protein of Clostridium botulinum (strain ATCC 19397 / Type A).